The chain runs to 96 residues: U-scoloptoxin(06)-Sm1a (96 aa).

Positions 1–23 are cleaved as a signal peptide; sequence MNSFSFFLVIFVVLNLQVAKLMA.

It belongs to the scoloptoxin-06 family. Post-translationally, contains 2 disulfide bonds. Expressed by the venom gland.

Its subcellular location is the secreted. The protein is U-scoloptoxin(06)-Sm1a of Scolopendra morsitans (Tanzanian blue ringleg centipede).